Reading from the N-terminus, the 397-residue chain is Mannonate dehydratase (397 aa).

Belongs to the mannonate dehydratase family. The cofactor is Fe(2+). Mn(2+) serves as cofactor.

It catalyses the reaction D-mannonate = 2-dehydro-3-deoxy-D-gluconate + H2O. It participates in carbohydrate metabolism; pentose and glucuronate interconversion. Its function is as follows. Catalyzes the dehydration of D-mannonate. This is Mannonate dehydratase from Saccharophagus degradans (strain 2-40 / ATCC 43961 / DSM 17024).